A 103-amino-acid polypeptide reads, in one-letter code: Large ribosomal subunit protein eL42 (103 aa).

2 residues coordinate Zn(2+): Cys18 and Cys21. A C4-type zinc finger spans residues 18–81 (CPKCRTHTEH…TVLKLKCSKC (64 aa)). The interval 40-62 (LSEGERRYARKKKGYGSKRKPEQ) is disordered. Residues 47 to 57 (YARKKKGYGSK) are compositionally biased toward basic residues. Zn(2+) contacts are provided by Cys78 and Cys81.

It belongs to the eukaryotic ribosomal protein eL42 family. As to quaternary structure, part of the 50S ribosomal subunit. It depends on Zn(2+) as a cofactor.

In terms of biological role, binds to the 23S rRNA. The protein is Large ribosomal subunit protein eL42 of Desulfurococcus amylolyticus (strain DSM 18924 / JCM 16383 / VKM B-2413 / 1221n) (Desulfurococcus kamchatkensis).